We begin with the raw amino-acid sequence, 248 residues long: 2,3-bisphosphoglycerate-dependent phosphoglycerate mutase (248 aa).

Residues 10–17 (RHGQSQWN), 23–24 (TG), R62, 89–92 (ERHY), K100, 116–117 (RR), and 183–184 (GN) contribute to the substrate site. H11 acts as the Tele-phosphohistidine intermediate in catalysis. E89 acts as the Proton donor/acceptor in catalysis.

It belongs to the phosphoglycerate mutase family. BPG-dependent PGAM subfamily.

The catalysed reaction is (2R)-2-phosphoglycerate = (2R)-3-phosphoglycerate. It functions in the pathway carbohydrate degradation; glycolysis; pyruvate from D-glyceraldehyde 3-phosphate: step 3/5. Functionally, catalyzes the interconversion of 2-phosphoglycerate and 3-phosphoglycerate. The chain is 2,3-bisphosphoglycerate-dependent phosphoglycerate mutase from Corynebacterium kroppenstedtii (strain DSM 44385 / JCM 11950 / CIP 105744 / CCUG 35717).